Here is a 713-residue protein sequence, read N- to C-terminus: Serologically defined colon cancer antigen 8 (713 aa).

S4 and S28 each carry phosphoserine. The segment at 84–103 is disordered; it reads QADKESEVSPSRRRKMSPLR. The stretch at 129–175 forms a coiled coil; that stretch reads IHHLEAEVKFCKEELSGMKNKIQVVVLENEGLQQQLKSQRQEETLRE. The segment at 194 to 215 is disordered; sequence EDSGVGETSKRPFSHDNADFGK. Over residues 201–212 the composition is skewed to basic and acidic residues; sequence TSKRPFSHDNAD. The interval 216–713 is sufficient for homodimerization; sequence AASAGEQLEL…QLPSMPQSDC (498 aa). Coiled coils occupy residues 223 to 273 and 348 to 707; these read LELE…LLAA and EEAN…QLPS. The mediates interaction with OFD1 stretch occupies residues 533-713; sequence HQLHLTRQEK…QLPSMPQSDC (181 aa).

As to quaternary structure, homodimer. Interacts with OFD1; the interaction is direct. Interacts with FAM161A. Interacts with RABEP2, ERC1 and CEP131. Expressed in thymus, prostate, testis, ovary, small intestine, colon, mucosa, colon and renal cancer tumors.

The protein resides in the cytoplasm. Its subcellular location is the cytoskeleton. It localises to the microtubule organizing center. The protein localises to the centrosome. It is found in the centriole. The protein resides in the cilium basal body. Its subcellular location is the cell junction. In terms of biological role, plays a role in the establishment of cell polarity and epithelial lumen formation. Also plays an essential role in ciliogenesis and subsequent Hedgehog signaling pathway that requires the presence of intact primary cilia for pathway activation. Mechanistically, interacts with and mediates RABEP2 centrosomal localization which is critical for ciliogenesis. The protein is Serologically defined colon cancer antigen 8 (SDCCAG8) of Homo sapiens (Human).